Here is a 168-residue protein sequence, read N- to C-terminus: Scytalone dehydratase arp1 (168 aa).

Residues Tyr29 and Tyr49 each contribute to the substrate site. Residues His84 and His109 contribute to the active site. A substrate-binding site is contributed by Asn130.

The protein belongs to the scytalone dehydratase family. As to quaternary structure, homotrimer. Each subunit contains an active site, located in the central part of the hydrophobic core of the monomer, which functions independently.

It is found in the endosome. The catalysed reaction is scytalone = 1,3,8-trihydroxynaphthalene + H2O. It participates in pigment biosynthesis; melanin biosynthesis. Its activity is regulated as follows. Fenoxanil inhibits arp1 scytalone dehydratase activity. Its function is as follows. Scytalone dehydratase; part of the gene cluster that mediates the biosynthesis of dihydroxynaphthalene (DHN)-melanin, a bluish-green pigment and a structural component of the conidial wall. The first step of the pathway is the production of the heptaketide naphtopyrone YWA1 by the polyketide synthase alb1 though condensation of acetyl-CoA with malonyl-CoA. The naphtopyrone YWA1 is then converted to the pentaketide 1,3,6,8-tetrahydroxynaphthalene (1,3,6,8-THN) by the heptaketide hydrolyase ayg1 though chain-length shortening. 1,3,6,8-THN is substrate of the hydroxynaphthalene reductase arp2 to yield scytalone. The scytalone dehydratase arp1 then reduces scytalone to 1,3,8-THN. 1,3,8-THN is also substrate of the hydroxynaphthalene reductase arp2 to yield vermelone. Vermelone is further converted by the multicopper oxidase abr1 to 1,8-DHN. Finally the laccase abr2 transforms 1,8-DHN to DHN-melanin. DHN-melanin biosynthesis appears to be initiated in endosomes where early enzymes (abl1, ayg1, arp1 and arp2) localize, with exocytosis leading to melanin deposition on the cell surface where late enzymes (abr1 and abr2) localize. DHN-melanin is an important structural component of the outer cell wall and is required for the presence of conidial surface hydrophobins. DHN-melanin also plays a crucial role in fungal virulence, including a protective role against the host's immune defenses. DHN-melanin also protects conidia against amoeba predation. This chain is Scytalone dehydratase arp1, found in Aspergillus fumigatus (strain ATCC MYA-4609 / CBS 101355 / FGSC A1100 / Af293) (Neosartorya fumigata).